Reading from the N-terminus, the 292-residue chain is Feruloyl esterase B (292 aa).

Positions 1-18 are cleaved as a signal peptide; sequence MLPRTLLGLALTAATGLC. Residues Asn-88, Asn-117, Asn-179, and Asn-245 are each glycosylated (N-linked (GlcNAc...) asparagine).

It belongs to the carbohydrate esterase 1 (CE1) family. Feruloyl esterase type B subfamily.

It localises to the secreted. It carries out the reaction feruloyl-polysaccharide + H2O = ferulate + polysaccharide.. In terms of biological role, involved in degradation of plant cell walls. Hydrolyzes of the feruloyl-arabinose ester bond in arabinoxylans as well as the feruloyl-galactose and feruloyl-arabinose ester bonds in pectin. This is Feruloyl esterase B (fae-1) from Neurospora crassa (strain ATCC 24698 / 74-OR23-1A / CBS 708.71 / DSM 1257 / FGSC 987).